Reading from the N-terminus, the 20-residue chain is T cell receptor alpha joining 3 (20 aa).

As to quaternary structure, alpha-beta TR is a heterodimer composed of an alpha and beta chain; disulfide-linked. The alpha-beta TR is associated with the transmembrane signaling CD3 coreceptor proteins to form the TR-CD3 (TcR or TCR). The assembly of alpha-beta TR heterodimers with CD3 occurs in the endoplasmic reticulum where a single alpha-beta TR heterodimer associates with one CD3D-CD3E heterodimer, one CD3G-CD3E heterodimer and one CD247 homodimer forming a stable octameric structure. CD3D-CD3E and CD3G-CD3E heterodimers preferentially associate with TR alpha and TR beta chains, respectively. The association of the CD247 homodimer is the last step of TcR assembly in the endoplasmic reticulum and is required for transport to the cell surface.

It localises to the cell membrane. Functionally, j region of the variable domain of T cell receptor (TR) alpha chain that participates in the antigen recognition. Alpha-beta T cell receptors are antigen specific receptors which are essential to the immune response and are present on the cell surface of T lymphocytes. Recognize peptide-major histocompatibility (MH) (pMH) complexes that are displayed by antigen presenting cells (APC), a prerequisite for efficient T cell adaptive immunity against pathogens. Binding of alpha-beta TR to pMH complex initiates TR-CD3 clustering on the cell surface and intracellular activation of LCK that phosphorylates the ITAM motifs of CD3G, CD3D, CD3E and CD247 enabling the recruitment of ZAP70. In turn ZAP70 phosphorylates LAT, which recruits numerous signaling molecules to form the LAT signalosome. The LAT signalosome propagates signal branching to three major signaling pathways, the calcium, the mitogen-activated protein kinase (MAPK) kinase and the nuclear factor NF-kappa-B (NF-kB) pathways, leading to the mobilization of transcription factors that are critical for gene expression and essential for T cell growth and differentiation. The T cell repertoire is generated in the thymus, by V-(D)-J rearrangement. This repertoire is then shaped by intrathymic selection events to generate a peripheral T cell pool of self-MH restricted, non-autoaggressive T cells. Post-thymic interaction of alpha-beta TR with the pMH complexes shapes TR structural and functional avidity. The sequence is that of T cell receptor alpha joining 3 from Homo sapiens (Human).